The sequence spans 310 residues: Vomeronasal type-1 receptor 50 (310 aa).

Residues 1-16 are Extracellular-facing; sequence MSKANLLHTDNNMKIT. The chain crosses the membrane as a helical span at residues 17–37; the sequence is LFSEVSVGISANSILFVVHLC. Topologically, residues 38–50 are cytoplasmic; sequence KLLHENKPKPIDL. A helical membrane pass occupies residues 51-71; it reads YIAFFSITQLMLLITMGLIAV. Over 72 to 93 the chain is Extracellular; that stretch reads DMFMPWGRWDSTTCQSLIYLHR. Cys-85 and Cys-172 are disulfide-bonded. The chain crosses the membrane as a helical span at residues 94 to 114; it reads LLRGLTFCATCLLNVLWTITL. Residues 115–134 lie on the Cytoplasmic side of the membrane; sequence SPRSSCLTKFKHKSPHHISG. A helical membrane pass occupies residues 135–155; sequence AFLFFCVLYMSFSSHLLVSII. The Extracellular segment spans residues 156–193; the sequence is ATFNSTSDNFLYVTQSCSILPVSYSRTSILSTMMTMRE. Asn-159 carries an N-linked (GlcNAc...) asparagine glycan. The chain crosses the membrane as a helical span at residues 194–214; sequence AFLIGLMALSSGYVVVLLWRH. Over 215–237 the chain is Cytoplasmic; it reads KKQARHLHSTSLSSKASPEQRAT. A helical membrane pass occupies residues 238–258; that stretch reads STIMLLMGFFVVLYILDTVIF. The Extracellular portion of the chain corresponds to 259-269; that stretch reads QARLKFKDVST. A helical transmembrane segment spans residues 270–290; that stretch reads FFCVKIIISHSYATFSPFVFI. Residues 291–310 are Cytoplasmic-facing; sequence CNDKYMIKFVTSMCGRIVNV.

This sequence belongs to the G-protein coupled receptor 1 family. Expressed in a subset of sensory neurons located in the apical layer of the vomeronasal organ.

The protein localises to the cell membrane. Putative pheromone receptor implicated in the regulation of social and reproductive behavior. This is Vomeronasal type-1 receptor 50 (Vmn1r50) from Mus musculus (Mouse).